An 824-amino-acid chain; its full sequence is 4-methylaminobutanoate oxidase (formaldehyde-forming) (824 aa).

H67 bears the Pros-8alpha-FAD histidine mark.

It belongs to the GcvT family. FAD is required as a cofactor.

It carries out the reaction 4-(methylamino)butanoate + O2 + H2O = 4-aminobutanoate + formaldehyde + H2O2. The protein operates within alkaloid degradation; nicotine degradation. In terms of biological role, catalyzes the oxidative demethylation of 4-methylaminobutanoate produced from the pyrrolidine ring of nicotine. To a much lesser extent, can also use sarcosine as substrate, but is not active against dimethylglycine, methylaminopropionitrile, methylaminopropylamine, and alpha-methylaminobutanoate. The protein is 4-methylaminobutanoate oxidase (formaldehyde-forming) (abo) of Paenarthrobacter nicotinovorans (Arthrobacter nicotinovorans).